We begin with the raw amino-acid sequence, 191 residues long: CASP-like protein 4C2 (191 aa).

Over M1–D29 the chain is Cytoplasmic. A helical transmembrane segment spans residues A30–M50. Topologically, residues G51–R72 are extracellular. Residues Y73–V93 form a helical membrane-spanning segment. Topologically, residues Y94–D116 are cytoplasmic. Residues Q117–L137 form a helical membrane-spanning segment. The Extracellular portion of the chain corresponds to Q138–R161. The chain crosses the membrane as a helical span at residues V162–G182. Residues L183–R191 lie on the Cytoplasmic side of the membrane.

It belongs to the Casparian strip membrane proteins (CASP) family. As to quaternary structure, homodimer and heterodimers.

The protein resides in the cell membrane. This Physcomitrium patens (Spreading-leaved earth moss) protein is CASP-like protein 4C2.